Reading from the N-terminus, the 459-residue chain is Exodeoxyribonuclease 7 large subunit (459 aa).

The protein belongs to the XseA family. In terms of assembly, heterooligomer composed of large and small subunits.

The protein localises to the cytoplasm. It catalyses the reaction Exonucleolytic cleavage in either 5'- to 3'- or 3'- to 5'-direction to yield nucleoside 5'-phosphates.. In terms of biological role, bidirectionally degrades single-stranded DNA into large acid-insoluble oligonucleotides, which are then degraded further into small acid-soluble oligonucleotides. The polypeptide is Exodeoxyribonuclease 7 large subunit (Pseudomonas fluorescens (strain ATCC BAA-477 / NRRL B-23932 / Pf-5)).